Consider the following 178-residue polypeptide: ATP-dependent protease subunit HslV (178 aa).

Thr-7 is a catalytic residue. Na(+) contacts are provided by Gly-162, Cys-165, and Thr-168.

The protein belongs to the peptidase T1B family. HslV subfamily. As to quaternary structure, a double ring-shaped homohexamer of HslV is capped on each side by a ring-shaped HslU homohexamer. The assembly of the HslU/HslV complex is dependent on binding of ATP.

It localises to the cytoplasm. It carries out the reaction ATP-dependent cleavage of peptide bonds with broad specificity.. With respect to regulation, allosterically activated by HslU binding. Protease subunit of a proteasome-like degradation complex believed to be a general protein degrading machinery. This is ATP-dependent protease subunit HslV from Herminiimonas arsenicoxydans.